Here is a 537-residue protein sequence, read N- to C-terminus: MSAPKLLSLGCIFFPLLLFQQARAQFPRQCATVEALRSGMCCPDLSPVSGPGTDRCGSSSGRGRCEAVTADSRPHSPQYPHDGRDDREVWPLRFFNRTCHCNGNFSGHNCGTCRPGWRGAACDQRVLIVRRNLLDLSKEEKNHFVRALDMAKRTTHPLFVIATRRSEEILGPDGNTPQFENISIYNYFVWTHYYSVKKTFLGVGQESFGEVDFSHEGPAFLTWHRYHLLRLEKDMQEMLQEPSFSLPYWNFATGKNVCDICTDDLMGSRSNFDSTLISPNSVFSQWRVVCDSLEDYDTLGTLCNSTEDGPIRRNPAGNVARPMVQRLPEPQDVAQCLEVGLFDTPPFYSNSTNSFRNTVEGYSDPTGKYDPAVRSLHNLAHLFLNGTGGQTHLSPNDPIFVLLHTFTDAVFDEWLRRYNADISTFPLENAPIGHNRQYNMVPFWPPVTNTEMFVTAPDNLGYTYEIQWPSREFSVPEIIAIAVVGALLLVALIFGTASYLIRARRSMDEANQPLLTDQYQCYAEEYEKLQNPNQSVV.

The signal sequence occupies residues 1–24; it reads MSAPKLLSLGCIFFPLLLFQQARA. Topologically, residues 25-477 are lumenal, melanosome; it reads QFPRQCATVE…WPSREFSVPE (453 aa). Disulfide bonds link Cys30-Cys41, Cys42-Cys65, Cys56-Cys99, Cys101-Cys110, and Cys113-Cys122. 2 N-linked (GlcNAc...) asparagine glycosylation sites follow: Asn96 and Asn104. Asn181 carries an N-linked (GlcNAc...) asparagine glycan. Zn(2+)-binding residues include His192, His215, and His224. Disulfide bonds link Cys258–Cys261 and Cys290–Cys303. Asn304 and Asn350 each carry an N-linked (GlcNAc...) asparagine glycan. The Zn(2+) site is built by His377 and His381. Residue Asn385 is glycosylated (N-linked (GlcNAc...) asparagine). Position 404 (His404) interacts with Zn(2+). The chain crosses the membrane as a helical span at residues 478–501; sequence IIAIAVVGALLLVALIFGTASYLI. Residues 502 to 537 are Cytoplasmic-facing; it reads RARRSMDEANQPLLTDQYQCYAEEYEKLQNPNQSVV.

It belongs to the tyrosinase family. Monomer. Interacts with ATP7A. Interacts with SLC45A2. Requires Cu(2+) as cofactor. Zn(2+) serves as cofactor. In terms of processing, glycosylated. As to expression, pigment cells.

The protein resides in the melanosome membrane. The enzyme catalyses 2 5,6-dihydroxyindole-2-carboxylate + O2 = 2 indole-5,6-quinone-2-carboxylate + 2 H2O. The protein operates within pigment biosynthesis; melanin biosynthesis. The activity depends critically on the nature of the bound metal ion. Catalyzes the oxidation of 5,6-dihydroxyindole-2-carboxylic acid (DHICA) in the presence of bound Cu(2+) ions, but lacks activity in the presence of bound Zn(2+) ions. In terms of biological role, plays a role in melanin biosynthesis. Catalyzes the oxidation of 5,6-dihydroxyindole-2-carboxylic acid (DHICA) into indole-5,6-quinone-2-carboxylic acid in the presence of bound Cu(2+) ions, but not in the presence of Zn(2+). May regulate or influence the type of melanin synthesized. Also to a lower extent, capable of hydroxylating tyrosine and producing melanin. The chain is 5,6-dihydroxyindole-2-carboxylic acid oxidase from Homo sapiens (Human).